Consider the following 152-residue polypeptide: Transcriptional regulator MraZ (152 aa).

SpoVT-AbrB domains are found at residues 5 to 52 and 81 to 124; these read ASSL…PLAQ and ATEY…DEAR.

The protein belongs to the MraZ family. Forms oligomers.

It localises to the cytoplasm. The protein resides in the nucleoid. In Pseudoalteromonas translucida (strain TAC 125), this protein is Transcriptional regulator MraZ.